We begin with the raw amino-acid sequence, 107 residues long: ATP synthase peripheral stalk subunit F6, mitochondrial (107 aa).

The transit peptide at 1 to 31 (MILQRLFRFSVIRSAVSVYLRRNIGVTAVAF) directs the protein to the mitochondrion. N6-acetyllysine occurs at positions 40, 45, and 78. An N6-acetyllysine; alternate mark is found at Lys-93 and Lys-98. 2 positions are modified to N6-succinyllysine; alternate: Lys-93 and Lys-98. Lys-104 carries the N6-acetyllysine modification.

This sequence belongs to the eukaryotic ATPase subunit F6 family. Component of the ATP synthase complex composed at least of ATP5F1A/subunit alpha, ATP5F1B/subunit beta, ATP5MC1/subunit c (homooctomer), MT-ATP6/subunit a, MT-ATP8/subunit 8, ATP5ME/subunit e, ATP5MF/subunit f, ATP5MG/subunit g, ATP5MK/subunit k, ATP5MJ/subunit j, ATP5F1C/subunit gamma, ATP5F1D/subunit delta, ATP5F1E/subunit epsilon, ATP5PF/subunit F6, ATP5PB/subunit b, ATP5PD/subunit d, ATP5PO/subunit OSCP. ATP synthase complex consists of a soluble F(1) head domain (subunits alpha(3) and beta(3)) - the catalytic core - and a membrane F(0) domain - the membrane proton channel (subunits c, a, 8, e, f, g, k and j). These two domains are linked by a central stalk (subunits gamma, delta, and epsilon) rotating inside the F1 region and a stationary peripheral stalk (subunits F6, b, d, and OSCP).

Its subcellular location is the mitochondrion. The protein resides in the mitochondrion inner membrane. In terms of biological role, subunit F6, of the mitochondrial membrane ATP synthase complex (F(1)F(0) ATP synthase or Complex V) that produces ATP from ADP in the presence of a proton gradient across the membrane which is generated by electron transport complexes of the respiratory chain. ATP synthase complex consist of a soluble F(1) head domain - the catalytic core - and a membrane F(1) domain - the membrane proton channel. These two domains are linked by a central stalk rotating inside the F(1) region and a stationary peripheral stalk. During catalysis, ATP synthesis in the catalytic domain of F(1) is coupled via a rotary mechanism of the central stalk subunits to proton translocation. In vivo, can only synthesize ATP although its ATP hydrolase activity can be activated artificially in vitro. Part of the complex F(0) domain. Part of the complex F(0) domain and the peripheric stalk, which acts as a stator to hold the catalytic alpha(3)beta(3) subcomplex and subunit a/ATP6 static relative to the rotary elements. This is ATP synthase peripheral stalk subunit F6, mitochondrial from Pongo abelii (Sumatran orangutan).